Consider the following 311-residue polypeptide: F-box protein At3g18320 (311 aa).

The 46-residue stretch at 1-46 (MTLPELPKDLVEEILCFVPATSLKRLRSTCKGWNRLFKDDKRFARK) folds into the F-box domain.

The chain is F-box protein At3g18320 from Arabidopsis thaliana (Mouse-ear cress).